The primary structure comprises 157 residues: N-acetylgalactosamine-specific phosphotransferase enzyme IIB component 2 (157 aa).

Positions 1–157 (MPNIVLSRID…EPAVDLFKLL (157 aa)) constitute a PTS EIIB type-4 domain. The active-site Pros-phosphohistidine intermediate is H15.

It localises to the cytoplasm. Its function is as follows. The phosphoenolpyruvate-dependent sugar phosphotransferase system (sugar PTS), a major carbohydrate active -transport system, catalyzes the phosphorylation of incoming sugar substrates concomitantly with their translocation across the cell membrane. This system is involved in N-acetylgalactosamine transport. In Escherichia coli (strain K12), this protein is N-acetylgalactosamine-specific phosphotransferase enzyme IIB component 2 (agaV).